The primary structure comprises 386 residues: Na(+)/H(+) antiporter NhaA (386 aa).

The next 11 helical transmembrane spans lie at 10–30, 58–78, 94–114, 124–144, 154–174, 176–196, 199–219, 253–273, 283–303, 327–347, and 361–381; these read MGSASGILLFFFALLAIIFAN, LLHWINDGFMAVFFVLVGLEV, IFPAVAAIGGMIVPALIYYLI, GWAIPMATDIAFALGIVALLG, FLLALAIIDDLGAIVVIAVFF, EELSIQALSVAIVAIAGLITL, MKVGHLCAYLIFGLILWAAVL, ILTPWCSFFVLPLFAFANAGV, IFSTLPLGIALGLIVGKPLGV, VFAIAILCGIGFTMSMFLAGL, and LSRLGILLGSSVSAILGYLLL.

The protein belongs to the NhaA Na(+)/H(+) (TC 2.A.33) antiporter family.

It is found in the cell inner membrane. The catalysed reaction is Na(+)(in) + 2 H(+)(out) = Na(+)(out) + 2 H(+)(in). Functionally, na(+)/H(+) antiporter that extrudes sodium in exchange for external protons. This chain is Na(+)/H(+) antiporter NhaA, found in Mannheimia succiniciproducens (strain KCTC 0769BP / MBEL55E).